The following is a 446-amino-acid chain: Probable D-serine dehydratase (446 aa).

An N6-(pyridoxal phosphate)lysine modification is found at Lys-116.

The protein belongs to the serine/threonine dehydratase family. DsdA subfamily. Requires pyridoxal 5'-phosphate as cofactor.

The catalysed reaction is D-serine = pyruvate + NH4(+). The chain is Probable D-serine dehydratase from Bacillus anthracis (strain CDC 684 / NRRL 3495).